A 428-amino-acid polypeptide reads, in one-letter code: Somatostatin receptor type 3 (428 aa).

The Extracellular portion of the chain corresponds to M1–G45. 2 N-linked (GlcNAc...) asparagine glycosylation sites follow: N18 and N31. A helical membrane pass occupies residues I46–L71. At R72–S81 the chain is on the cytoplasmic side. The chain crosses the membrane as a helical span at residues V82–A103. At Q104 to R118 the chain is on the extracellular side. C117 and C192 are disulfide-bonded. The chain crosses the membrane as a helical span at residues L119 to V140. Over D141–R162 the chain is Cytoplasmic. The helical transmembrane segment at M163–F182 threads the bilayer. The Extracellular segment spans residues S183–A206. Residues F207–V232 traverse the membrane as a helical segment. Over K233–R266 the chain is Cytoplasmic. The chain crosses the membrane as a helical span at residues M267–V288. Residues N289–G302 are Extracellular-facing. Residues L303–L325 form a helical membrane-spanning segment. The Cytoplasmic portion of the chain corresponds to S326–L428. A phosphoserine mark is found at S341, S346, and S351. The segment at R343–L428 is disordered. T357 is modified (phosphothreonine). The segment covering T357 to E370 has biased composition (acidic residues). The span at R385–L412 shows a compositional bias: polar residues.

The protein belongs to the G-protein coupled receptor 1 family. Homodimer and heterodimer with SSTR2. Heterodimerization with SSTR2 inactivates SSTR3 receptor function. Phosphorylated. Phosphorylation increases upon somatostatin binding. As to expression, densely expressed in cerebellum and at moderate levels in the amygdala, cortex, striatum, spleen, liver and pituitary.

It localises to the cell membrane. Functionally, receptor for somatostatin-14 and -28. This receptor is coupled via pertussis toxin sensitive G proteins to inhibition of adenylyl cyclase. The chain is Somatostatin receptor type 3 (Sstr3) from Rattus norvegicus (Rat).